We begin with the raw amino-acid sequence, 430 residues long: Alpha-1,6-mannosyl-glycoprotein 2-beta-N-acetylglucosaminyltransferase (430 aa).

The Cytoplasmic portion of the chain corresponds to 1 to 12; it reads MANLWKKQRLRD. Residues 13–35 traverse the membrane as a helical; Signal-anchor for type II membrane protein segment; it reads TGLCRLGILFAVTLSIVLMLVSV. Over 36–430 the chain is Lumenal; it reads PRTALNGSSI…YRYSSSSASP (395 aa). Residues N41 and N61 are each glycosylated (N-linked (GlcNAc...) asparagine). Residues 104 to 108 and D135 contribute to the substrate site; that span reads YVHNR. C177 and C188 are joined by a disulfide. A substrate-binding site is contributed by 205 to 209; that stretch reads SLKHH. Residue D237 coordinates Mn(2+). C259 and C262 are oxidised to a cystine. An N-linked (GlcNAc...) asparagine glycan is attached at N295. Residues C310 and C414 are joined by a disulfide bond. H345 contributes to the Mn(2+) binding site.

This sequence belongs to the glycosyltransferase 16 (GT16) protein family. It depends on Mn(2+) as a cofactor.

The protein localises to the golgi apparatus membrane. The catalysed reaction is an N(4)-{beta-D-GlcNAc-(1-&gt;2)-alpha-D-Man-(1-&gt;3)-[alpha-D-Man-(1-&gt;6)]-beta-D-Man-(1-&gt;4)-beta-D-GlcNAc-(1-&gt;4)-beta-D-GlcNAc}-L-asparaginyl-[protein] + UDP-N-acetyl-alpha-D-glucosamine = N(4)-{beta-D-GlcNAc-(1-&gt;2)-alpha-D-Man-(1-&gt;3)-[beta-D-GlcNAc-(1-&gt;2)-alpha-D-Man-(1-&gt;6)]-beta-D-Man-(1-&gt;4)-beta-D-GlcNAc-(1-&gt;4)-beta-D-GlcNAc}-L-asparaginyl-[protein] + UDP + H(+). Its pathway is protein modification; protein glycosylation. Catalyzes an essential step in the conversion of oligo-mannose and hybrid to complex N-glycans. This chain is Alpha-1,6-mannosyl-glycoprotein 2-beta-N-acetylglucosaminyltransferase, found in Arabidopsis thaliana (Mouse-ear cress).